The following is a 555-amino-acid chain: CTP synthase (555 aa).

Residues 1–271 (MVKRGKKTKY…DDKLAELFNI (271 aa)) form an amidoligase domain region. A CTP-binding site is contributed by S19. Position 19 (S19) interacts with UTP. ATP is bound by residues 20–25 (SLGKGL) and D77. 2 residues coordinate Mg(2+): D77 and E145. CTP is bound by residues 152–154 (DIE), 192–197 (KTKPTQ), and K228. UTP contacts are provided by residues 192 to 197 (KTKPTQ) and K228. One can recognise a Glutamine amidotransferase type-1 domain in the interval 297–538 (RVGVVGKYVE…VHAAREQRDQ (242 aa)). G358 lines the L-glutamine pocket. C385 acts as the Nucleophile; for glutamine hydrolysis in catalysis. L-glutamine-binding positions include 386–389 (LGLQ), E409, and R466. Residues H511 and E513 contribute to the active site.

The protein belongs to the CTP synthase family. Homotetramer.

The enzyme catalyses UTP + L-glutamine + ATP + H2O = CTP + L-glutamate + ADP + phosphate + 2 H(+). The catalysed reaction is L-glutamine + H2O = L-glutamate + NH4(+). It catalyses the reaction UTP + NH4(+) + ATP = CTP + ADP + phosphate + 2 H(+). It functions in the pathway pyrimidine metabolism; CTP biosynthesis via de novo pathway; CTP from UDP: step 2/2. Allosterically activated by GTP, when glutamine is the substrate; GTP has no effect on the reaction when ammonia is the substrate. The allosteric effector GTP functions by stabilizing the protein conformation that binds the tetrahedral intermediate(s) formed during glutamine hydrolysis. Inhibited by the product CTP, via allosteric rather than competitive inhibition. Functionally, catalyzes the ATP-dependent amination of UTP to CTP with either L-glutamine or ammonia as the source of nitrogen. Regulates intracellular CTP levels through interactions with the four ribonucleotide triphosphates. The sequence is that of CTP synthase from Anaeromyxobacter sp. (strain Fw109-5).